We begin with the raw amino-acid sequence, 711 residues long: MSKAHGSRPYRRHNVVIPRQQPEKEMNFVQQQPPPSDAAARQMMYPPNCQVGVQDPVYLAKEFNLLTLNPQQLEGSRHQQMAKGPEKSLYSQYEQKVRPCIDLVDSLRALGVEQDLALPAIAVIGDQSSGKSSVLEALSGVALPRGSGIVTRCPLVLKLKRDPHKAWRGRISYRKTELQFQDPSQVEKEIRQAQNIIAGQGLGISHELISLEITSPEVPDLTLIDLPGITRVAVGNQPQDIGVQIKALIKNYIQKQETINLVVVPCNVDIATTEALSMAQEVDPNGDRTIGVLTKPDLVDRGTEKTVVNVAQNLTYHLQKGYMIVRCRGQEEITNQLSLAEATEKERMFFQTHPYFRALLEEGKATVPCLAERLTKELILHINKSLPLLEKQIRESHQRATDELHQCGDSIPSNEADKMFFLIEKIKLFNQDIDKLIEGEEIVKKNETRLYNKIREEFEHWALVLTANTQKVKNIVSEEVSVYEKQYRGKELLGFVNYKTFETIVHQYIEQLVEPALTMLRKTIEIVWQAFTDTAKKHFSVFSNLSQTIQNKIEDIKTRQAETAENLIRLQFRMEQLVYCQDQIYSVVLRKVRKEVFNPAGKAAQDLQLKFPFPKDLPSMSSNDEIGVHLNAYFLETSKRLANQIPFIIQYFVLQENGSCLQKAMMQILQEREQYSWLLQEHADTSAKRRFLKEKIYRLAQARRALYMFFS.

Residues 115–387 (DLALPAIAVI…LILHINKSLP (273 aa)) form the Dynamin-type G domain. Residues 125-132 (GDQSSGKS) form a G1 motif region. 125-132 (GDQSSGKS) lines the GTP pocket. A G2 motif region spans residues 150–152 (VTR). The G3 motif stretch occupies residues 225–228 (DLPG). GTP is bound by residues 225 to 229 (DLPGI) and 294 to 297 (TKPD). The interval 294–297 (TKPD) is G4 motif. Residues 326–329 (RCRG) form a G5 motif region. One can recognise a GED domain in the interval 623-711 (NDEIGVHLNA…ARRALYMFFS (89 aa)).

This sequence belongs to the TRAFAC class dynamin-like GTPase superfamily. Dynamin/Fzo/YdjA family.

It is found in the cytoplasm. The protein resides in the nucleus. Functionally, interferon-induced dynamin-like GTPase with antiviral activity against vesicular stomatitis virus (VSV). The polypeptide is Interferon-induced GTP-binding protein Mx2 (MX2) (Canis lupus familiaris (Dog)).